The following is a 225-amino-acid chain: NAD(P)H-quinone oxidoreductase subunit K, chloroplastic (225 aa).

C43, C44, C108, and C139 together coordinate [4Fe-4S] cluster.

This sequence belongs to the complex I 20 kDa subunit family. In terms of assembly, NDH is composed of at least 16 different subunits, 5 of which are encoded in the nucleus. [4Fe-4S] cluster serves as cofactor.

Its subcellular location is the plastid. The protein resides in the chloroplast thylakoid membrane. The catalysed reaction is a plastoquinone + NADH + (n+1) H(+)(in) = a plastoquinol + NAD(+) + n H(+)(out). It carries out the reaction a plastoquinone + NADPH + (n+1) H(+)(in) = a plastoquinol + NADP(+) + n H(+)(out). Functionally, NDH shuttles electrons from NAD(P)H:plastoquinone, via FMN and iron-sulfur (Fe-S) centers, to quinones in the photosynthetic chain and possibly in a chloroplast respiratory chain. The immediate electron acceptor for the enzyme in this species is believed to be plastoquinone. Couples the redox reaction to proton translocation, and thus conserves the redox energy in a proton gradient. The protein is NAD(P)H-quinone oxidoreductase subunit K, chloroplastic of Platanus occidentalis (Sycamore).